Reading from the N-terminus, the 974-residue chain is Villin-4 (974 aa).

Gelsolin-like repeat units follow at residues 29-79 (FIPT…DEAG), 150-190 (VHVK…QERA), 262-305 (GQAN…DDRK), 394-451 (LQVW…EERG), 532-572 (MQAI…TDQE), and 634-675 (LKVT…KNKL). The interval 738-783 (VKNGGTPVADKPKRRTPASYGGRASVPDKSQQRSRSMSFSPDRVRV) is disordered. S777 and S787 each carry phosphoserine. Disordered stretches follow at residues 801–833 (NARN…APKS) and 845–930 (KIPP…PVSD). The span at 824–833 (SSKFAPAPKS) shows a compositional bias: low complexity. Residues 872–887 (NSKEQEEKKENDKEEG) show a composition bias toward basic and acidic residues. Positions 888–898 (SMSSRIESLTI) are enriched in polar residues. A Phosphoserine modification is found at S890. The 66-residue stretch at 909–974 (EEDLPAHPYD…NKFKMAVQLF (66 aa)) folds into the HP domain. Residues 912–921 (LPAHPYDRLK) are compositionally biased toward basic and acidic residues.

The protein belongs to the villin/gelsolin family. In terms of tissue distribution, preferentially expressed in vegetative tissues. Detected in the whole seedling, hypocotyl, cotyledon, primary root, roots hair cells and trichomes. Expressed in flowers but not in the silique.

The protein localises to the cytoplasm. Its subcellular location is the cytoskeleton. In terms of biological role, binds actin and actin filament bundles in a Ca(2+)-insensitive manner, but caps the barbed end of actin filaments and is able to sever them in a calcium-dependent manner. Involved in root hair growth through regulating actin organization in a Ca(2+)-dependent manner. This chain is Villin-4, found in Arabidopsis thaliana (Mouse-ear cress).